The following is a 334-amino-acid chain: MAKPIVFSGVQPSGELTIGNYLGALRNWVKMQEDYECIFCVVDLHAITVRQDPVALRKATLDVLALYLACGIDPNKSTIFVQSHVPEHTQLSWVLNCYTYFGEMSRMTQFKDKSARYAENINVGLFDYPVLMAADILLYQAKSVPVGDDQKQHLEITRDIANRFNALYGNIFTIPEIFIGKAGARIMSLQDPEKKMSKSDDNRNNVVTLLEDPKSVAKKIKRAVTDSDEPPVVRYDVQNKAGVSNLLDILSAVTDKPIADLEKEFEGKMYGHLKTAVADEVSTLLASLQERFHQYRNDETLLDNILRQGAEKARAKAQETLAKVYEAVGFVAAK.

Residues 11 to 13 (QPS) and 19 to 20 (GN) each bind ATP. The 'HIGH' region motif lies at 12 to 20 (PSGELTIGN). Asp-135 contacts L-tryptophan. Residues 147-149 (GDD), Ile-186, and 195-199 (KMSKS) contribute to the ATP site. Residues 195 to 199 (KMSKS) carry the 'KMSKS' region motif.

It belongs to the class-I aminoacyl-tRNA synthetase family. Homodimer.

Its subcellular location is the cytoplasm. The enzyme catalyses tRNA(Trp) + L-tryptophan + ATP = L-tryptophyl-tRNA(Trp) + AMP + diphosphate + H(+). In terms of biological role, catalyzes the attachment of tryptophan to tRNA(Trp). The protein is Tryptophan--tRNA ligase of Haemophilus influenzae (strain ATCC 51907 / DSM 11121 / KW20 / Rd).